A 268-amino-acid polypeptide reads, in one-letter code: Mitochondrial distribution and morphology protein 12 (268 aa).

The region spanning M1 to A266 is the SMP-LTD domain. Positions E66–N136 are disordered. Positions P102–D111 are enriched in polar residues. Over residues T112–K121 the composition is skewed to basic and acidic residues.

This sequence belongs to the MDM12 family. In terms of assembly, component of the ER-mitochondria encounter structure (ERMES) or MDM complex, composed of MMM1, MDM10, MDM12 and MDM34. An MMM1 homodimer associates with one molecule of MDM12 on each side in a pairwise head-to-tail manner, and the SMP-LTD domains of MMM1 and MDM12 generate a continuous hydrophobic tunnel for phospholipid trafficking.

The protein localises to the mitochondrion outer membrane. The protein resides in the endoplasmic reticulum membrane. In terms of biological role, component of the ERMES/MDM complex, which serves as a molecular tether to connect the endoplasmic reticulum (ER) and mitochondria. Components of this complex are involved in the control of mitochondrial shape and protein biogenesis, and function in nonvesicular lipid trafficking between the ER and mitochondria. MDM12 is required for the interaction of the ER-resident membrane protein MMM1 and the outer mitochondrial membrane-resident beta-barrel protein MDM10. The MDM12-MMM1 subcomplex functions in the major beta-barrel assembly pathway that is responsible for biogenesis of all mitochondrial outer membrane beta-barrel proteins, and acts in a late step after the SAM complex. The MDM10-MDM12-MMM1 subcomplex further acts in the TOM40-specific pathway after the action of the MDM12-MMM1 complex. Essential for establishing and maintaining the structure of mitochondria and maintenance of mtDNA nucleoids. This chain is Mitochondrial distribution and morphology protein 12, found in Laccaria bicolor (strain S238N-H82 / ATCC MYA-4686) (Bicoloured deceiver).